The sequence spans 94 residues: Pyrimidine/purine nucleoside phosphorylase (94 aa).

It belongs to the nucleoside phosphorylase PpnP family.

The enzyme catalyses a purine D-ribonucleoside + phosphate = a purine nucleobase + alpha-D-ribose 1-phosphate. It carries out the reaction adenosine + phosphate = alpha-D-ribose 1-phosphate + adenine. It catalyses the reaction cytidine + phosphate = cytosine + alpha-D-ribose 1-phosphate. The catalysed reaction is guanosine + phosphate = alpha-D-ribose 1-phosphate + guanine. The enzyme catalyses inosine + phosphate = alpha-D-ribose 1-phosphate + hypoxanthine. It carries out the reaction thymidine + phosphate = 2-deoxy-alpha-D-ribose 1-phosphate + thymine. It catalyses the reaction uridine + phosphate = alpha-D-ribose 1-phosphate + uracil. The catalysed reaction is xanthosine + phosphate = alpha-D-ribose 1-phosphate + xanthine. Its function is as follows. Catalyzes the phosphorolysis of diverse nucleosides, yielding D-ribose 1-phosphate and the respective free bases. Can use uridine, adenosine, guanosine, cytidine, thymidine, inosine and xanthosine as substrates. Also catalyzes the reverse reactions. This is Pyrimidine/purine nucleoside phosphorylase from Escherichia coli (strain ATCC 8739 / DSM 1576 / NBRC 3972 / NCIMB 8545 / WDCM 00012 / Crooks).